A 398-amino-acid chain; its full sequence is Inner membrane protein YjgN (398 aa).

Residues 1-24 (MAQVINEMDVPSHSFVFHGTGERY) lie on the Cytoplasmic side of the membrane. A helical transmembrane segment spans residues 25-45 (FLICVVNVLLTIITLGIYLPW). Residues 46 to 73 (ALMKCKRYLYANMEVNGQRFSYGITGGN) are Periplasmic-facing. A helical membrane pass occupies residues 74-94 (VFFSCLVFVFFYFAILMTVSA). Residue Asp95 is a topological domain, cytoplasmic. Residues 96 to 116 (MPLIGCVLTLSLLVLLIFMAA) traverse the membrane as a helical segment. The Periplasmic segment spans residues 117–142 (KGLRYQALMTSLNGVRFSFNCSMKGV). A helical membrane pass occupies residues 143–163 (WWVTFFLPILMAIGMGTVFFI). Residues 164-175 (STKMLHANSSSS) are Cytoplasmic-facing. Residues 176 to 196 (VIVSVVLMAIVGIVSIGIFNG) traverse the membrane as a helical segment. Over 197 to 228 (TLYSLVMSFLWSNTSFGIHRFKVKLDTAYCIK) the chain is Periplasmic. A helical transmembrane segment spans residues 229–249 (YAILAFLALLPFLAVAGYIIF). Topologically, residues 250–278 (DQILNAYDSSVYANDDIENLQQFMEMQRK) are cytoplasmic. Residues 279–299 (MIIAQLIYYFGIAVSTSYLTV) form a helical membrane-spanning segment. Residues 300 to 333 (SLRNHFMSNLSLNDGRIRFRSTLTYHGMLYRMCA) lie on the Periplasmic side of the membrane. A helical membrane pass occupies residues 334–354 (LVVISGITGGLAYPLLKIWMI). Residues 355–398 (DWQAKNTYLLGDLDDLPLINKEEQPDKGFLASISRGIMPSLPFL) are Cytoplasmic-facing.

Its subcellular location is the cell inner membrane. This chain is Inner membrane protein YjgN (yjgN), found in Escherichia coli O157:H7.